The following is a 164-amino-acid chain: MIELLSAAETWVAVGFAILMVVFVYFGVHRTVLNALDNRRDRIKAELDEASRLKEEAAKLLADYKARAASAEREAEAIIASAKDEAERIAAEAKAKLEDFVARRTKTAEGKIAMAEAQAIADVRAAAANAAVAAASSILSQSVKGSVADELIGKGIAEVRSKLN.

The helical transmembrane segment at 8–28 (AETWVAVGFAILMVVFVYFGV) threads the bilayer.

Belongs to the ATPase B chain family. In terms of assembly, F-type ATPases have 2 components, F(1) - the catalytic core - and F(0) - the membrane proton channel. F(1) has five subunits: alpha(3), beta(3), gamma(1), delta(1), epsilon(1). F(0) has three main subunits: a(1), b(2) and c(10-14). The alpha and beta chains form an alternating ring which encloses part of the gamma chain. F(1) is attached to F(0) by a central stalk formed by the gamma and epsilon chains, while a peripheral stalk is formed by the delta and b chains.

Its subcellular location is the cell inner membrane. Its function is as follows. F(1)F(0) ATP synthase produces ATP from ADP in the presence of a proton or sodium gradient. F-type ATPases consist of two structural domains, F(1) containing the extramembraneous catalytic core and F(0) containing the membrane proton channel, linked together by a central stalk and a peripheral stalk. During catalysis, ATP synthesis in the catalytic domain of F(1) is coupled via a rotary mechanism of the central stalk subunits to proton translocation. Component of the F(0) channel, it forms part of the peripheral stalk, linking F(1) to F(0). This chain is ATP synthase subunit b 1, found in Rhodopseudomonas palustris (strain BisA53).